Consider the following 524-residue polypeptide: Cytochrome P450 monooxygenase drtD (524 aa).

The helical transmembrane segment at 2–22 (SDTYLVAASGLAVCFFVLYLL) threads the bilayer. C418 contributes to the heme binding site.

It belongs to the cytochrome P450 family. Heme serves as cofactor.

It localises to the membrane. Its pathway is secondary metabolite biosynthesis; terpenoid biosynthesis. Cytochrome P450 monooxygenase; part of the gene cluster that mediates the biosynthesis of various drimane-type sesquiterpene esters, compounds that exhibit diverse biological activities and are widely present in eukaryotes. The pathway begins with the synthesis of the backbone drimenol by the terpene cyclase drtB using farnesyl pyrophosphate (FPP) as substrate. The cytochrome P450 monooxygenase drtD is then responsible for the hydroxylations at C-6, C-9 and C-12, as well as the oxidation of hydroxyl groups at C-6 and C-11 to a ketone and an aldehyde, respectively. Then, the biosynthesis can go in two directions, either the hydroxylated drimenol is further hydroxylated at C-2 and C-3 by an enzyme(s) not associated with the drt cluster, or the FAD-binding oxidoreductase drtC further oxidizes C-11 or C-12 to form the butyrolactone ring. DrtB, drtD and drtC are solely responsible for the formation of the different drimane structures observed during drimane sesquiterpenes biosynthesis. The polyketide synthase drtA synthesizes different lengths (C6 and C8) of PKS chains, which are then oxidized to varying degrees by the short-chain dehydrogenase drtF. Finally, these PKS chains are transferred onto drimane sesquiterpenes by the acyltransferase drtE, forming the sesquiterpene esters. In addition to the different fatty acyl-CoA chains produced by drtA, drtE is also able to use cinnamoyl-CoA as a substrate. This chain is Cytochrome P450 monooxygenase drtD, found in Aspergillus calidoustus.